The chain runs to 251 residues: uncharacterized protein (251 aa).

12 to 21 contacts NADP(+); it reads TGASSQGDIG. Serine 148 is a binding site for substrate. Tyrosine 161 serves as the catalytic Proton acceptor.

The protein belongs to the short-chain dehydrogenases/reductases (SDR) family.

This is an uncharacterized protein from Bacillus subtilis (strain 168).